The sequence spans 367 residues: Phosphoribosylaminoimidazole-succinocarboxamide synthase (367 aa).

Belongs to the SAICAR synthetase family.

The catalysed reaction is 5-amino-1-(5-phospho-D-ribosyl)imidazole-4-carboxylate + L-aspartate + ATP = (2S)-2-[5-amino-1-(5-phospho-beta-D-ribosyl)imidazole-4-carboxamido]succinate + ADP + phosphate + 2 H(+). Its pathway is purine metabolism; IMP biosynthesis via de novo pathway; 5-amino-1-(5-phospho-D-ribosyl)imidazole-4-carboxamide from 5-amino-1-(5-phospho-D-ribosyl)imidazole-4-carboxylate: step 1/2. This chain is Phosphoribosylaminoimidazole-succinocarboxamide synthase, found in Shewanella piezotolerans (strain WP3 / JCM 13877).